Consider the following 203-residue polypeptide: DNA-directed RNA polymerase III subunit rpc8 (203 aa).

This sequence belongs to the eukaryotic RPB7/RPC8 RNA polymerase subunit family. As to quaternary structure, component of the RNA polymerase III (Pol III) complex consisting of 17 subunits. Rpc25/rpc8 and rpc17/rpc9 form a Pol III subcomplex.

The protein resides in the cytoplasm. The protein localises to the nucleus. Functionally, DNA-dependent RNA polymerase catalyzes the transcription of DNA into RNA using the four ribonucleoside triphosphates as substrates. Specific peripheric component of RNA polymerase III which synthesizes small RNAs, such as 5S rRNA and tRNA. This Schizosaccharomyces pombe (strain 972 / ATCC 24843) (Fission yeast) protein is DNA-directed RNA polymerase III subunit rpc8 (rpc25).